A 116-amino-acid chain; its full sequence is CDKN2AIP N-terminal-like protein (116 aa).

The residue at position 1 (methionine 1) is an N-acetylmethionine. Residues 24 to 116 (AEQFRSYSES…RSELMKKHQS (93 aa)) enclose the XRN2-binding (XTBD) domain.

This sequence belongs to the CARF family. As to quaternary structure, interacts with XRN2; the interaction is direct.

This Rattus norvegicus (Rat) protein is CDKN2AIP N-terminal-like protein (Cdkn2aipnl).